Here is a 311-residue protein sequence, read N- to C-terminus: MACAAVMIPGLLRCSVGAICTEAASLRLTLSTLRHLTLTSIMKSKRKTDHMERTASVLRREIVSAAKVCGAASESPSVKSLRLLVADQDFSFKAGQWVDFFIPGVSVVGGFSICSSPRLLEQERVIELAVKYTNHPPALWVHNTCTLDSEVAVRVGGEFFFDPQPADASRNLVLIAGGVGINPLLSILRHAADLLREQANKRNGYEIGTIKLFYSAKSTSELLFKKNILDLVNEFPEKIACSSHVTKQTTQINAELKPYITGRITEKEIRDHISKETLFYICGPPPMTDFFSKQLENNHVPKEHICFEKWW.

The signal sequence occupies residues Met1 to Gly17. The FAD-binding FR-type domain maps to His50–Ser186. NAD(+) is bound at residue Gly178–Pro183.

The sequence is that of Oxidoreductase NAD-binding domain-containing protein 1 (OXNAD1) from Pongo abelii (Sumatran orangutan).